A 506-amino-acid polypeptide reads, in one-letter code: Trans-cinnamate 4-monooxygenase (506 aa).

A helical transmembrane segment spans residues 3-23 (LLLLEKTLIGLFLAAVVAIAV). Residues 213-218 (RSRLAQ) and Ala-307 each bind (E)-cinnamate. Cys-448 lines the heme pocket.

This sequence belongs to the cytochrome P450 family. Heme is required as a cofactor.

It is found in the membrane. It carries out the reaction (E)-cinnamate + reduced [NADPH--hemoprotein reductase] + O2 = (E)-4-coumarate + oxidized [NADPH--hemoprotein reductase] + H2O + H(+). The protein operates within phenylpropanoid metabolism; trans-4-coumarate biosynthesis; trans-4-coumarate from trans-cinnamate: step 1/1. In terms of biological role, catalyzes the first oxidative step of the phenylpropanoid pathway in higher plants by transforming trans-cinnamate into p-coumarate. The compounds formed by this pathway are essential components for lignification, pollination, and defense against ultraviolet light, predators and pathogens. This is Trans-cinnamate 4-monooxygenase (CYP73A11) from Glycine max (Soybean).